Reading from the N-terminus, the 642-residue chain is Threonine--tRNA ligase (642 aa).

A TGS domain is found at 1 to 61 (MPVITLPDGS…DTDSELSIIT (61 aa)). Residues 243 to 534 (DHRKIGKQLD…LIEEYAGKFP (292 aa)) form a catalytic region. Residues C334, H385, and H511 each contribute to the Zn(2+) site.

The protein belongs to the class-II aminoacyl-tRNA synthetase family. As to quaternary structure, homodimer. Zn(2+) serves as cofactor.

The protein resides in the cytoplasm. The enzyme catalyses tRNA(Thr) + L-threonine + ATP = L-threonyl-tRNA(Thr) + AMP + diphosphate + H(+). Its function is as follows. Catalyzes the attachment of threonine to tRNA(Thr) in a two-step reaction: L-threonine is first activated by ATP to form Thr-AMP and then transferred to the acceptor end of tRNA(Thr). Also edits incorrectly charged L-seryl-tRNA(Thr). In Shewanella sediminis (strain HAW-EB3), this protein is Threonine--tRNA ligase.